We begin with the raw amino-acid sequence, 241 residues long: UDP-2,3-diacylglucosamine hydrolase (241 aa).

Residues aspartate 8, histidine 10, aspartate 41, asparagine 79, and histidine 114 each contribute to the Mn(2+) site. Asparagine 79–arginine 80 contributes to the substrate binding site. Substrate-binding residues include aspartate 122, lysine 164, lysine 167, and histidine 195. The Mn(2+) site is built by histidine 195 and histidine 197.

It belongs to the LpxH family. The cofactor is Mn(2+).

It is found in the cell inner membrane. The catalysed reaction is UDP-2-N,3-O-bis[(3R)-3-hydroxytetradecanoyl]-alpha-D-glucosamine + H2O = 2-N,3-O-bis[(3R)-3-hydroxytetradecanoyl]-alpha-D-glucosaminyl 1-phosphate + UMP + 2 H(+). It functions in the pathway glycolipid biosynthesis; lipid IV(A) biosynthesis; lipid IV(A) from (3R)-3-hydroxytetradecanoyl-[acyl-carrier-protein] and UDP-N-acetyl-alpha-D-glucosamine: step 4/6. Its function is as follows. Hydrolyzes the pyrophosphate bond of UDP-2,3-diacylglucosamine to yield 2,3-diacylglucosamine 1-phosphate (lipid X) and UMP by catalyzing the attack of water at the alpha-P atom. Involved in the biosynthesis of lipid A, a phosphorylated glycolipid that anchors the lipopolysaccharide to the outer membrane of the cell. The chain is UDP-2,3-diacylglucosamine hydrolase from Aliivibrio fischeri (strain MJ11) (Vibrio fischeri).